Consider the following 315-residue polypeptide: Acetaldehyde dehydrogenase 2 (315 aa).

15–18 contributes to the NAD(+) binding site; sequence SGNI. The Acyl-thioester intermediate role is filled by C135. NAD(+) is bound by residues 166–174 and N293; that span reads SAGPGTRAN.

The protein belongs to the acetaldehyde dehydrogenase family.

It carries out the reaction acetaldehyde + NAD(+) + CoA = acetyl-CoA + NADH + H(+). The protein is Acetaldehyde dehydrogenase 2 of Paraburkholderia phymatum (strain DSM 17167 / CIP 108236 / LMG 21445 / STM815) (Burkholderia phymatum).